The primary structure comprises 98 residues: Cystatin-A (98 aa).

M1 carries the post-translational modification N-acetylmethionine. A Secondary area of contact motif is present at residues 46 to 50 (QVVAG).

It belongs to the cystatin family.

Its subcellular location is the cytoplasm. Its function is as follows. This is an intracellular thiol proteinase inhibitor. This chain is Cystatin-A (CSTA), found in Bos taurus (Bovine).